An 80-amino-acid polypeptide reads, in one-letter code: Mitotic-spindle organizing protein 1 (80 aa).

The protein belongs to the MOZART1 family. Part of the gamma-tubulin complex.

It is found in the cytoplasm. Its subcellular location is the cytoskeleton. It localises to the microtubule organizing center. The protein resides in the spindle pole body. In terms of biological role, required for gamma-tubulin complex recruitment to the microtubule organizing center (MTOC). This Pyricularia oryzae (strain 70-15 / ATCC MYA-4617 / FGSC 8958) (Rice blast fungus) protein is Mitotic-spindle organizing protein 1.